The primary structure comprises 195 residues: Cytochrome c biogenesis ATP-binding export protein CcmA (195 aa).

Positions 1-195 constitute an ABC transporter domain; sequence MLSLHQLQFN…IKSAQILQLV (195 aa). Position 33-40 (33-40) interacts with ATP; the sequence is GANGSGKS.

This sequence belongs to the ABC transporter superfamily. CcmA exporter (TC 3.A.1.107) family. The complex is composed of two ATP-binding proteins (CcmA) and two transmembrane proteins (CcmB).

The protein localises to the cell inner membrane. It carries out the reaction heme b(in) + ATP + H2O = heme b(out) + ADP + phosphate + H(+). Functionally, part of the ABC transporter complex CcmAB involved in the biogenesis of c-type cytochromes; once thought to export heme, this seems not to be the case, but its exact role is uncertain. Responsible for energy coupling to the transport system. The polypeptide is Cytochrome c biogenesis ATP-binding export protein CcmA (Rickettsia felis (strain ATCC VR-1525 / URRWXCal2) (Rickettsia azadi)).